The primary structure comprises 349 residues: ATPase GET3 (349 aa).

ATP is bound at residue 26 to 33 (KGGVGKTT). Aspartate 57 is a catalytic residue. Residues glutamate 243 and asparagine 270 each contribute to the ATP site. Zn(2+) is bound by residues cysteine 280 and cysteine 283.

The protein belongs to the arsA ATPase family. Homodimer. Component of the Golgi to ER traffic (GET) complex, which is composed of GET1, GET2 and GET3. Within the complex, GET1 and GET2 form a heterotetramer which is stabilized by phosphatidylinositol binding and which binds to the GET3 homodimer. Interacts with the chloride channel protein GEF1.

It is found in the cytoplasm. Its subcellular location is the endoplasmic reticulum. The protein resides in the golgi apparatus. Its function is as follows. ATPase required for the post-translational delivery of tail-anchored (TA) proteins to the endoplasmic reticulum. Recognizes and selectively binds the transmembrane domain of TA proteins in the cytosol. This complex then targets to the endoplasmic reticulum by membrane-bound receptors GET1 and GET2, where the tail-anchored protein is released for insertion. This process is regulated by ATP binding and hydrolysis. ATP binding drives the homodimer towards the closed dimer state, facilitating recognition of newly synthesized TA membrane proteins. ATP hydrolysis is required for insertion. Subsequently, the homodimer reverts towards the open dimer state, lowering its affinity for the GET1-GET2 receptor, and returning it to the cytosol to initiate a new round of targeting. Cooperates with the HDEL receptor ERD2 to mediate the ATP-dependent retrieval of resident ER proteins that contain a C-terminal H-D-E-L retention signal from the Golgi to the ER. Involved in low-level resistance to the oxyanions arsenite and arsenate, and in heat tolerance. The sequence is that of ATPase GET3 from Clavispora lusitaniae (strain ATCC 42720) (Yeast).